We begin with the raw amino-acid sequence, 186 residues long: dITP/XTP pyrophosphatase (186 aa).

Residue 7 to 12 (TSNPGK) coordinates substrate. Mg(2+) contacts are provided by E36 and D65. Residue D65 is the Proton acceptor of the active site. Substrate-binding positions include S66, 140–143 (FGYD), K163, and 168–169 (HR).

It belongs to the HAM1 NTPase family. In terms of assembly, homodimer. Mg(2+) serves as cofactor. It depends on Mn(2+) as a cofactor.

It catalyses the reaction XTP + H2O = XMP + diphosphate + H(+). The enzyme catalyses dITP + H2O = dIMP + diphosphate + H(+). It carries out the reaction ITP + H2O = IMP + diphosphate + H(+). Pyrophosphatase that catalyzes the hydrolysis of nucleoside triphosphates to their monophosphate derivatives, with a high preference for the non-canonical purine nucleotides XTP (xanthosine triphosphate), dITP (deoxyinosine triphosphate) and ITP. Seems to function as a house-cleaning enzyme that removes non-canonical purine nucleotides from the nucleotide pool, thus preventing their incorporation into DNA/RNA and avoiding chromosomal lesions. The protein is dITP/XTP pyrophosphatase of Pyrococcus horikoshii (strain ATCC 700860 / DSM 12428 / JCM 9974 / NBRC 100139 / OT-3).